Consider the following 83-residue polypeptide: Exodeoxyribonuclease 7 small subunit (83 aa).

The protein belongs to the XseB family. As to quaternary structure, heterooligomer composed of large and small subunits.

Its subcellular location is the cytoplasm. It carries out the reaction Exonucleolytic cleavage in either 5'- to 3'- or 3'- to 5'-direction to yield nucleoside 5'-phosphates.. Functionally, bidirectionally degrades single-stranded DNA into large acid-insoluble oligonucleotides, which are then degraded further into small acid-soluble oligonucleotides. The chain is Exodeoxyribonuclease 7 small subunit from Nitrobacter hamburgensis (strain DSM 10229 / NCIMB 13809 / X14).